The following is a 459-amino-acid chain: Siroheme synthase (459 aa).

The segment at 1-204 (MDHLPIFCQL…ADEKAVNATT (204 aa)) is precorrin-2 dehydrogenase /sirohydrochlorin ferrochelatase. Residues 22–23 (DV) and 43–44 (LT) contribute to the NAD(+) site. Ser128 carries the post-translational modification Phosphoserine. Residues 216-459 (GEVVLVGAGP…KLNWFSNYYD (244 aa)) are uroporphyrinogen-III C-methyltransferase. Pro225 contacts S-adenosyl-L-methionine. Residue Asp248 is the Proton acceptor of the active site. Lys270 serves as the catalytic Proton donor. S-adenosyl-L-methionine is bound by residues 301–303 (GGD), Ile306, 331–332 (TA), Met382, and Gly411.

It in the N-terminal section; belongs to the precorrin-2 dehydrogenase / sirohydrochlorin ferrochelatase family. The protein in the C-terminal section; belongs to the precorrin methyltransferase family.

The enzyme catalyses uroporphyrinogen III + 2 S-adenosyl-L-methionine = precorrin-2 + 2 S-adenosyl-L-homocysteine + H(+). It catalyses the reaction precorrin-2 + NAD(+) = sirohydrochlorin + NADH + 2 H(+). It carries out the reaction siroheme + 2 H(+) = sirohydrochlorin + Fe(2+). The protein operates within cofactor biosynthesis; adenosylcobalamin biosynthesis; precorrin-2 from uroporphyrinogen III: step 1/1. It participates in cofactor biosynthesis; adenosylcobalamin biosynthesis; sirohydrochlorin from precorrin-2: step 1/1. Its pathway is porphyrin-containing compound metabolism; siroheme biosynthesis; precorrin-2 from uroporphyrinogen III: step 1/1. It functions in the pathway porphyrin-containing compound metabolism; siroheme biosynthesis; siroheme from sirohydrochlorin: step 1/1. The protein operates within porphyrin-containing compound metabolism; siroheme biosynthesis; sirohydrochlorin from precorrin-2: step 1/1. Functionally, multifunctional enzyme that catalyzes the SAM-dependent methylations of uroporphyrinogen III at position C-2 and C-7 to form precorrin-2 via precorrin-1. Then it catalyzes the NAD-dependent ring dehydrogenation of precorrin-2 to yield sirohydrochlorin. Finally, it catalyzes the ferrochelation of sirohydrochlorin to yield siroheme. The chain is Siroheme synthase from Salmonella agona (strain SL483).